Reading from the N-terminus, the 194-residue chain is Yellow fluorescent protein (194 aa).

Lumazine-binding repeat units follow at residues 1 to 98 and 99 to 194; these read MFKG…SGGH and ILSA…NQCW. Position 179 to 183 (179 to 183) interacts with FMN; sequence KVNVE.

In terms of assembly, homodimer. FMN is required as a cofactor.

Functionally, antenna protein that modulates the color of the bioluminescence emission of the luciferase. In the presence of YFP and only at temperatures below 20 degrees Celsius, luciferase exhibits a bimodal emission spectrum with a new peak at 545 nM (yellow), in addition to the one at 485 nM. The sequence is that of Yellow fluorescent protein (luxY) from Aliivibrio fischeri (Vibrio fischeri).